Reading from the N-terminus, the 156-residue chain is Ribosome maturation factor RimP (156 aa).

Belongs to the RimP family.

The protein localises to the cytoplasm. Required for maturation of 30S ribosomal subunits. In Microcystis aeruginosa (strain NIES-843 / IAM M-2473), this protein is Ribosome maturation factor RimP.